A 104-amino-acid chain; its full sequence is Signal recognition particle 19 kDa protein (104 aa).

This sequence belongs to the SRP19 family. Part of the signal recognition particle protein translocation system, which is composed of SRP and FtsY. Archaeal SRP consists of a 7S RNA molecule of 300 nucleotides and two protein subunits: SRP54 and SRP19.

It localises to the cytoplasm. Functionally, involved in targeting and insertion of nascent membrane proteins into the cytoplasmic membrane. Binds directly to 7S RNA and mediates binding of the 54 kDa subunit of the SRP. The protein is Signal recognition particle 19 kDa protein of Archaeoglobus fulgidus (strain ATCC 49558 / DSM 4304 / JCM 9628 / NBRC 100126 / VC-16).